Here is a 364-residue protein sequence, read N- to C-terminus: MTTMSDLSVDLVGEILSRVPLTSLSAVRCTCKSWNTLSKHQIFGKAELAATKQFLGFTVMDYKVCSLRFDLQGIRNDGDDFVDHGEVYDVFHSDGLLLCVTKDHWRLVVWNPYLGQIRWIRARKQFGYSNMFSLGYNNSNRNHKIIEVSYVYDKTACPQYSEIYDFNSSSWRLVEINPVWFLHSDRVSLKGNTYFFAQDLLKDAKIENYLLCFDFTAERFGPHLPLPVHSYDDVTLSCVRQEQLALLYGNNETDDSLEIWITNQIDPNAVSWSIFLKVDIKPLIGFPKDFDPGSFFIDEEKKVVVVYDLDGHLYSTKKNCAYQRLYIIGEDGYFTSVKIKCSDSPEFSAYAPSLVTYKPTNYAK.

In terms of domain architecture, F-box spans 2-49; it reads TTMSDLSVDLVGEILSRVPLTSLSAVRCTCKSWNTLSKHQIFGKAELA.

In Arabidopsis thaliana (Mouse-ear cress), this protein is F-box protein At1g59680.